The chain runs to 67 residues: Bowman-Birk type proteinase inhibitor 1 (67 aa).

7 disulfide bridges follow: Cys-5–Cys-59, Cys-6–Cys-21, Cys-9–Cys-55, Cys-11–Cys-19, Cys-29–Cys-36, Cys-33–Cys-48, and Cys-38–Cys-46.

This sequence belongs to the Bowman-Birk serine protease inhibitor family. Monomer. Although dimerization may occur in solution. In terms of tissue distribution, seed.

Functionally, inhibits trypsin but not chymotrypsin. The inhibitor consists of 2 domains and has 2 sites of interaction with trypsin. This chain is Bowman-Birk type proteinase inhibitor 1, found in Dioclea glabra.